A 726-amino-acid chain; its full sequence is Catalase-peroxidase (726 aa).

The segment at residues 90–213 is a cross-link (tryptophyl-tyrosyl-methioninium (Trp-Tyr) (with M-239)); the sequence is WHAAGTYRIG…LAAVQMGLIY (124 aa). Catalysis depends on H91, which acts as the Proton acceptor. A cross-link (tryptophyl-tyrosyl-methioninium (Tyr-Met) (with W-90)) is located at residues 213–239; it reads YVNPEGPNGNPDPLAAARDIRETFARM. H254 serves as a coordination point for heme b. Residues 334-359 form a disordered region; it reads AHQWKPKHGAGANTVPDAHDPSKRHA.

The protein belongs to the peroxidase family. Peroxidase/catalase subfamily. Homodimer or homotetramer. Requires heme b as cofactor. Post-translationally, formation of the three residue Trp-Tyr-Met cross-link is important for the catalase, but not the peroxidase activity of the enzyme.

The catalysed reaction is H2O2 + AH2 = A + 2 H2O. It catalyses the reaction 2 H2O2 = O2 + 2 H2O. Bifunctional enzyme with both catalase and broad-spectrum peroxidase activity. This Bradyrhizobium sp. (strain BTAi1 / ATCC BAA-1182) protein is Catalase-peroxidase.